Here is a 277-residue protein sequence, read N- to C-terminus: Undecaprenyl-diphosphatase (277 aa).

The next 7 helical transmembrane spans lie at 3-23 (IALL…EFLP), 44-64 (AKVF…LVYW), 82-102 (QFAL…LLFG), 109-129 (LFTP…ILWA), 188-208 (ATDF…VYSL), 218-238 (ADVP…WLCI), and 249-269 (SFIP…ATAW).

Belongs to the UppP family.

The protein resides in the cell inner membrane. It carries out the reaction di-trans,octa-cis-undecaprenyl diphosphate + H2O = di-trans,octa-cis-undecaprenyl phosphate + phosphate + H(+). In terms of biological role, catalyzes the dephosphorylation of undecaprenyl diphosphate (UPP). Confers resistance to bacitracin. This chain is Undecaprenyl-diphosphatase, found in Polaromonas sp. (strain JS666 / ATCC BAA-500).